A 328-amino-acid polypeptide reads, in one-letter code: Lytic polysaccharide monooxygenase aasB (328 aa).

Positions 1 to 18 are cleaved as a signal peptide; sequence MKAFFAISASTLLATVHG. Histidine 19 is a Cu(2+) binding site. A disulfide bond links cysteine 40 and cysteine 43. N-linked (GlcNAc...) asparagine glycosylation is present at asparagine 54. 6 cysteine pairs are disulfide-bonded: cysteine 66-cysteine 245, cysteine 102-cysteine 203, cysteine 118-cysteine 145, cysteine 153-cysteine 161, cysteine 167-cysteine 173, and cysteine 181-cysteine 192. Histidine 109 is a binding site for Cu(2+). Tyrosine 242 lines the Cu(2+) pocket. Residue asparagine 306 is glycosylated (N-linked (GlcNAc...) asparagine).

This sequence belongs to the polysaccharide monooxygenase AA13 family. Cu(2+) serves as cofactor.

Its subcellular location is the secreted. It carries out the reaction starch + reduced acceptor + O2 = D-glucono-1,5-lactone-terminated malto-oligosaccharides + short-chain malto-oligosaccharides + acceptor + H2O.. Its function is as follows. Lytic polysaccharide monooxygenase involved in breakdown of granular resistant starch. In Emericella nidulans (strain FGSC A4 / ATCC 38163 / CBS 112.46 / NRRL 194 / M139) (Aspergillus nidulans), this protein is Lytic polysaccharide monooxygenase aasB.